The chain runs to 562 residues: Catalase T (562 aa).

Active-site residues include His64 and Asn137. Heme is bound at residue Tyr351.

It belongs to the catalase family. As to quaternary structure, homotetramer. The cofactor is heme.

The protein resides in the cytoplasm. It catalyses the reaction 2 H2O2 = O2 + 2 H2O. Occurs in almost all aerobically respiring organisms and serves to protect cells from the toxic effects of hydrogen peroxide. This is Catalase T (CTT1) from Saccharomyces cerevisiae (strain YJM789) (Baker's yeast).